We begin with the raw amino-acid sequence, 654 residues long: tRNA 5-methylaminomethyl-2-thiouridine biosynthesis bifunctional protein MnmC (654 aa).

The segment at 1–235 (MSDFQHAQLD…KREMLSGTYQ (235 aa)) is tRNA (mnm(5)s(2)U34)-methyltransferase. The FAD-dependent cmnm(5)s(2)U34 oxidoreductase stretch occupies residues 261–654 (VGGGLAGCAS…LRDLVRGQRG (394 aa)).

The protein in the N-terminal section; belongs to the methyltransferase superfamily. tRNA (mnm(5)s(2)U34)-methyltransferase family. In the C-terminal section; belongs to the DAO family. The cofactor is FAD.

It localises to the cytoplasm. It catalyses the reaction 5-aminomethyl-2-thiouridine(34) in tRNA + S-adenosyl-L-methionine = 5-methylaminomethyl-2-thiouridine(34) in tRNA + S-adenosyl-L-homocysteine + H(+). In terms of biological role, catalyzes the last two steps in the biosynthesis of 5-methylaminomethyl-2-thiouridine (mnm(5)s(2)U) at the wobble position (U34) in tRNA. Catalyzes the FAD-dependent demodification of cmnm(5)s(2)U34 to nm(5)s(2)U34, followed by the transfer of a methyl group from S-adenosyl-L-methionine to nm(5)s(2)U34, to form mnm(5)s(2)U34. In Pseudomonas aeruginosa (strain ATCC 15692 / DSM 22644 / CIP 104116 / JCM 14847 / LMG 12228 / 1C / PRS 101 / PAO1), this protein is tRNA 5-methylaminomethyl-2-thiouridine biosynthesis bifunctional protein MnmC.